The primary structure comprises 196 residues: Transcriptional regulatory protein UhpA (196 aa).

A Response regulatory domain is found at 3–116; the sequence is TVALIDDHLI…ELIAAVHTVA (114 aa). Asp-54 carries the post-translational modification 4-aspartylphosphate. The region spanning 131-196 is the HTH luxR-type domain; it reads ASGRQDPLTK…ELARRMFDGW (66 aa). Positions 155 to 174 form a DNA-binding region, H-T-H motif; that stretch reads VKEIAAELGLSPKTVHVHRA.

Phosphorylated and dephosphorylated by UhpB.

It localises to the cytoplasm. Its activity is regulated as follows. Phosphorylation by UhpB enhances DNA binding activity. Functionally, part of the UhpABC signaling cascade that controls the expression of the hexose phosphate transporter UhpT. Activates the transcription of the uhpT gene. Acts by binding specifically to the uhpT promoter region. This Escherichia coli (strain K12) protein is Transcriptional regulatory protein UhpA (uhpA).